The sequence spans 317 residues: Ribose-phosphate pyrophosphokinase A (317 aa).

3 residues coordinate Mg(2+): Asp-130, His-132, and Asp-145. A binding of phosphoribosylpyrophosphate region spans residues 212-227 (KDKVALIVDDMADTCG).

This sequence belongs to the ribose-phosphate pyrophosphokinase family. It depends on Mg(2+) as a cofactor.

It carries out the reaction D-ribose 5-phosphate + ATP = 5-phospho-alpha-D-ribose 1-diphosphate + AMP + H(+). It participates in metabolic intermediate biosynthesis; 5-phospho-alpha-D-ribose 1-diphosphate biosynthesis; 5-phospho-alpha-D-ribose 1-diphosphate from D-ribose 5-phosphate (route I): step 1/1. The polypeptide is Ribose-phosphate pyrophosphokinase A (prsA) (Dictyostelium discoideum (Social amoeba)).